Consider the following 493-residue polypeptide: Glutamyl-tRNA(Gln) amidotransferase subunit A (493 aa).

Catalysis depends on charge relay system residues K78 and S158. Catalysis depends on S182, which acts as the Acyl-ester intermediate.

Belongs to the amidase family. GatA subfamily. Heterotrimer of A, B and C subunits.

It catalyses the reaction L-glutamyl-tRNA(Gln) + L-glutamine + ATP + H2O = L-glutaminyl-tRNA(Gln) + L-glutamate + ADP + phosphate + H(+). In terms of biological role, allows the formation of correctly charged Gln-tRNA(Gln) through the transamidation of misacylated Glu-tRNA(Gln) in organisms which lack glutaminyl-tRNA synthetase. The reaction takes place in the presence of glutamine and ATP through an activated gamma-phospho-Glu-tRNA(Gln). The chain is Glutamyl-tRNA(Gln) amidotransferase subunit A from Rickettsia rickettsii (strain Iowa).